Consider the following 1131-residue polypeptide: Homeobox-DDT domain protein RLT3 (1131 aa).

The homeobox; TALE-type DNA-binding region spans 2–56 (KRKSPLQVQALEGFYLEQMYPTPKEMEDLGKSLGLTLKEVRGWFKRRRSRGKGVK). The segment covering 239-251 (LQKRSTEKKRRSI) has biased composition (basic residues). The tract at residues 239–264 (LQKRSTEKKRRSIHREAELNKDETQR) is disordered. Residues 252–264 (HREAELNKDETQR) are compositionally biased toward basic and acidic residues. The DDT domain maps to 365 to 424 (PESVKKLFKVVHFLYTYSVTLDIGPFTLDEFTRAFHDKDSLLLGKIHLSLLKLLLLDVET). The disordered stretch occupies residues 579–609 (EDPDKSQSDSDDSGSVDDESDDCSISSGDEI). The segment covering 587–600 (DSDDSGSVDDESDD) has biased composition (acidic residues).

The protein localises to the nucleus. In terms of biological role, transcriptional regulator required for the maintenance of the plant vegetative phase. May prevent the early activation of the vegetative-to-reproductive transition by regulating key genes that contribute to flower timing. This chain is Homeobox-DDT domain protein RLT3, found in Arabidopsis thaliana (Mouse-ear cress).